A 67-amino-acid polypeptide reads, in one-letter code: Ubiquinol-cytochrome c reductase complex assembly factor 6 (67 aa).

Residues 1 to 8 (MPGGVPWS) lie on the Mitochondrial matrix side of the membrane. Residues 9–25 (AYLKMLSSSLLAMCAGA) form a helical; Signal-anchor for type II membrane protein membrane-spanning segment. The Mitochondrial intermembrane segment spans residues 26–67 (QVVHWYYRPDLTIPEIPPKPGELKTELLGLKERRHEPHVSQQ).

This sequence belongs to the UQCC6 family. Interacts with UQCRC1. Interacts with UQCRQ. Interacts with UQCC5. Forms a complex, named COMB/coordinator of mitochondrial CYTB biogenesis, composed of UQCC1, UQCC2, UQCC4, UQCC5 and UQCC6; stabilizes nascent cytochrome b/MT-CYB and promotes its membrane insertion. Forms a complex, named COMA, composed of UQCC1, UQCC2 and UQCC4; activates MT-CYB translation. Forms a complex, named COMC, composed of UQCC1, UQCC2; UQCC3 and UQCC4; mediates MT-CYB hemylation and association with the first nuclear-encoded complex III subunit UQCRQ. Interacts with MT-CYB. In terms of tissue distribution, highly expressed in brown adipose, cardiac and skeletal muscle (at protein level).

The protein localises to the mitochondrion inner membrane. Required for the assembly and stability of the mitochondrial ubiquinol-cytochrome c reductase complex (complex III or cytochrome b-c1 complex), a multisubunit transmembrane complex that is part of the mitochondrial electron transport chain (ETC) which drives oxidative phosphorylation. Mediates early complex III biogenesis. Participates in regulating the levels of electron transport chain proteins, and therefore energy supply, in response to changes in energy demand. Also required for cytochrome c oxidase complex (complex IV) assembly. The sequence is that of Ubiquinol-cytochrome c reductase complex assembly factor 6 from Mus musculus (Mouse).